Here is a 161-residue protein sequence, read N- to C-terminus: M-phase phosphoprotein 6 (161 aa).

Glycyl lysine isopeptide (Lys-Gly) (interchain with G-Cter in SUMO2) cross-links involve residues lysine 37 and lysine 86. Serine 111 is subject to Phosphoserine. The short motif at 117-134 (RRYETLVGTIGKKFVKKR) is the Nuclear localization signal element. Glycyl lysine isopeptide (Lys-Gly) (interchain with G-Cter in SUMO2) cross-links involve residues lysine 128, lysine 151, and lysine 154.

Belongs to the MPP6 family. As to quaternary structure, associates with the RNA exosome complex, mediated by EXOSC3. Interacts with ARHGAP18. Interacts with exosome cofactors EXOSC10 and MTREX. Post-translationally, phosphorylated in M (mitotic) phase.

The protein resides in the nucleus. Its subcellular location is the nucleolus. It localises to the cytoplasm. RNA-binding protein that associates with the RNA exosome complex. Involved in the 3'-processing of the 7S pre-RNA to the mature 5.8S rRNA and plays a role in recruiting the RNA exosome complex to pre-rRNA; this function may include C1D. The polypeptide is M-phase phosphoprotein 6 (Mus musculus (Mouse)).